Here is a 142-residue protein sequence, read N- to C-terminus: COA8 family protein Y39B6A.34, mitochondrial (142 aa).

It belongs to the COA8 family.

It is found in the mitochondrion inner membrane. Its function is as follows. May be required for cytochrome c complex (COX) assembly and function, COX being the terminal component of the mitochondrial respiratory chain. In Caenorhabditis elegans, this protein is COA8 family protein Y39B6A.34, mitochondrial.